A 430-amino-acid polypeptide reads, in one-letter code: Elongation factor 1-gamma (430 aa).

The GST N-terminal domain occupies 2-84 (VAGKLYTYPE…YVANETLRGS (83 aa)). A GST C-terminal domain is found at 85–213 (SDLEKAQIIQ…FKLCEKAGEF (129 aa)). 2 stretches are compositionally biased toward basic and acidic residues: residues 232–255 (KTEKAPKAVKAKPEKKEVPKKEQE) and 269–278 (PKSKDPFDEM). Positions 232 to 278 (KTEKAPKAVKAKPEKKEVPKKEQEEPADAAEEALAAEPKSKDPFDEM) are disordered. Positions 271–430 (SKDPFDEMPK…RKFNQGKIFK (160 aa)) constitute an EF-1-gamma C-terminal domain.

In terms of assembly, EF-1 is composed of four subunits: alpha, beta, delta, and gamma.

In terms of biological role, probably plays a role in anchoring the complex to other cellular components. This Artemia salina (Brine shrimp) protein is Elongation factor 1-gamma.